Reading from the N-terminus, the 211-residue chain is Peptidyl-tRNA hydrolase (211 aa).

TRNA is bound at residue tyrosine 17. Residue histidine 22 is the Proton acceptor of the active site. Phenylalanine 79, asparagine 81, and asparagine 127 together coordinate tRNA.

This sequence belongs to the PTH family. Monomer.

It is found in the cytoplasm. The catalysed reaction is an N-acyl-L-alpha-aminoacyl-tRNA + H2O = an N-acyl-L-amino acid + a tRNA + H(+). Functionally, hydrolyzes ribosome-free peptidyl-tRNAs (with 1 or more amino acids incorporated), which drop off the ribosome during protein synthesis, or as a result of ribosome stalling. Its function is as follows. Catalyzes the release of premature peptidyl moieties from peptidyl-tRNA molecules trapped in stalled 50S ribosomal subunits, and thus maintains levels of free tRNAs and 50S ribosomes. The sequence is that of Peptidyl-tRNA hydrolase from Solidesulfovibrio magneticus (strain ATCC 700980 / DSM 13731 / RS-1) (Desulfovibrio magneticus).